Here is a 369-residue protein sequence, read N- to C-terminus: Maltose/maltodextrin import ATP-binding protein MalK (369 aa).

An ABC transporter domain is found at 4–234 (VTLRNVCKAY…PQNRFVAGFI (231 aa)). 36–43 (GPSGCGKS) serves as a coordination point for ATP.

The protein belongs to the ABC transporter superfamily. Maltooligosaccharide importer (TC 3.A.1.1.1) family. In terms of assembly, the complex is composed of two ATP-binding proteins (MalK), two transmembrane proteins (MalG and MalK) and a solute-binding protein (MalE).

Its subcellular location is the cell inner membrane. It catalyses the reaction D-maltose(out) + ATP + H2O = D-maltose(in) + ADP + phosphate + H(+). Functionally, part of the ABC transporter complex MalEFGK involved in maltose/maltodextrin import. Responsible for energy coupling to the transport system. This Photobacterium profundum (strain SS9) protein is Maltose/maltodextrin import ATP-binding protein MalK.